We begin with the raw amino-acid sequence, 288 residues long: Elongation factor Ts (288 aa).

The tract at residues 80–83 (TDFV) is involved in Mg(2+) ion dislocation from EF-Tu.

The protein belongs to the EF-Ts family.

Its subcellular location is the cytoplasm. Functionally, associates with the EF-Tu.GDP complex and induces the exchange of GDP to GTP. It remains bound to the aminoacyl-tRNA.EF-Tu.GTP complex up to the GTP hydrolysis stage on the ribosome. In Chromobacterium violaceum (strain ATCC 12472 / DSM 30191 / JCM 1249 / CCUG 213 / NBRC 12614 / NCIMB 9131 / NCTC 9757 / MK), this protein is Elongation factor Ts.